The following is a 585-amino-acid chain: GRR1-like protein 1 (585 aa).

Positions 1–48 (MGLRFPPKVLEHILSFIDSNEDRNSVSLVCKSWFETERKTRKRVFVGN) constitute an F-box domain. K70 contributes to the 1D-myo-inositol hexakisphosphate binding site. The interaction with auxin-responsive proteins stretch occupies residues 77-78 (DY). Residues 109 to 110 (KR) and R340 contribute to the 1D-myo-inositol hexakisphosphate site. Residues 343–348 (PSEPDL) are interaction with auxin-responsive proteins. Residue 397-399 (CFR) coordinates 1D-myo-inositol hexakisphosphate. Residues 401–405 (CVIEP) are interaction with auxin-responsive proteins. Residue R432 coordinates 1D-myo-inositol hexakisphosphate. The tract at residues 460–461 (AF) is interaction with auxin-responsive proteins. Residues 480 to 481 (KK) and R505 each bind 1D-myo-inositol hexakisphosphate.

Part of a SCF (SKP1-cullin-F-box) protein ligase complex. Interacts with CUL1, SKP1A/ASK1 and SKP1B/ASK2. Interacts with Aux/IAA proteins (IAA7 and IAA12) in an auxin-dependent manner. Ubiquitous.

Its subcellular location is the nucleus. It functions in the pathway protein modification; protein ubiquitination. Component of SCF(ASK-cullin-F-box) E3 ubiquitin ligase complexes, which may mediate the ubiquitination and subsequent proteasomal degradation of target proteins. Auxin receptor that mediates Aux/IAA proteins proteasomal degradation and auxin-regulated transcription. Involved in embryogenesis regulation by auxin. Confers sensitivity to the virulent bacterial pathogen P.syringae. Mediates glucose repression in yeast. In Arabidopsis thaliana (Mouse-ear cress), this protein is GRR1-like protein 1 (GRH1).